Reading from the N-terminus, the 256-residue chain is 5-keto-4-deoxy-D-glucarate aldolase (256 aa).

Histidine 50 (proton acceptor) is an active-site residue. Glutamine 151 serves as a coordination point for substrate. Glutamate 153 contacts Mg(2+). Substrate contacts are provided by serine 178 and aspartate 179. Aspartate 179 serves as a coordination point for Mg(2+).

The protein belongs to the HpcH/HpaI aldolase family. KDGluc aldolase subfamily. Homohexamer; trimer of dimers. Mg(2+) serves as cofactor.

It carries out the reaction 5-dehydro-4-deoxy-D-glucarate = 2-hydroxy-3-oxopropanoate + pyruvate. It catalyses the reaction 2-dehydro-3-deoxy-D-glucarate = 2-hydroxy-3-oxopropanoate + pyruvate. Its pathway is carbohydrate acid metabolism; galactarate degradation; D-glycerate from galactarate: step 2/3. Its function is as follows. Catalyzes the reversible retro-aldol cleavage of both 5-keto-4-deoxy-D-glucarate and 2-keto-3-deoxy-D-glucarate to pyruvate and tartronic semialdehyde. The sequence is that of 5-keto-4-deoxy-D-glucarate aldolase from Salmonella gallinarum (strain 287/91 / NCTC 13346).